The sequence spans 685 residues: MSIVTVPSATSKVQQIKTLISVACTVNHLKQIHVSLINHHLHHDTFLVNLLLKRTLFFRQTKYSYLLFSHTQFPNIFLYNSLINGFVNNHLFHETLDLFLSIRKHGLYLHGFTFPLVLKACTRASSRKLGIDLHSLVVKCGFNHDVAAMTSLLSIYSGSGRLNDAHKLFDEIPDRSVVTWTALFSGYTTSGRHREAIDLFKKMVEMGVKPDSYFIVQVLSACVHVGDLDSGEWIVKYMEEMEMQKNSFVRTTLVNLYAKCGKMEKARSVFDSMVEKDIVTWSTMIQGYASNSFPKEGIELFLQMLQENLKPDQFSIVGFLSSCASLGALDLGEWGISLIDRHEFLTNLFMANALIDMYAKCGAMARGFEVFKEMKEKDIVIMNAAISGLAKNGHVKLSFAVFGQTEKLGISPDGSTFLGLLCGCVHAGLIQDGLRFFNAISCVYALKRTVEHYGCMVDLWGRAGMLDDAYRLICDMPMRPNAIVWGALLSGCRLVKDTQLAETVLKELIALEPWNAGNYVQLSNIYSVGGRWDEAAEVRDMMNKKGMKKIPGYSWIELEGKVHEFLADDKSHPLSDKIYAKLEDLGNEMRLMGFVPTTEFVFFDVEEEEKERVLGYHSEKLAVALGLISTDHGQVIRVVKNLRVCGDCHEVMKLISKITRREIVVRDNNRFHCFTNGSCSCNDYW.

12 PPR repeats span residues 75-109 (NIFLYNSLINGFVNNHLFHETLDLFLSIRKHGLYL), 110-144 (HGFTFPLVLKACTRASSRKLGIDLHSLVVKCGFNH), 145-175 (DVAAMTSLLSIYSGSGRLNDAHKLFDEIPDR), 176-210 (SVVTWTALFSGYTTSGRHREAIDLFKKMVEMGVKP), 211-245 (DSYFIVQVLSACVHVGDLDSGEWIVKYMEEMEMQK), 246-276 (NSFVRTTLVNLYAKCGKMEKARSVFDSMVEK), 277-311 (DIVTWSTMIQGYASNSFPKEGIELFLQMLQENLKP), 312-346 (DQFSIVGFLSSCASLGALDLGEWGISLIDRHEFLT), 347-381 (NLFMANALIDMYAKCGAMARGFEVFKEMKEKDIVI), 383-412 (NAAISGLAKNGHVKLSFAVFGQTEKLGISP), 413-443 (DGSTFLGLLCGCVHAGLIQDGLRFFNAISCV), and 449-479 (TVEHYGCMVDLWGRAGMLDDAYRLICDMPMR). A type E motif region spans residues 484 to 559 (VWGALLSGCR…IPGYSWIELE (76 aa)). Residues 560–590 (GKVHEFLADDKSHPLSDKIYAKLEDLGNEMR) are type E(+) motif. Positions 591 to 685 (LMGFVPTTEF…NGSCSCNDYW (95 aa)) are type DYW motif.

Belongs to the PPR family. PCMP-H subfamily.

This Arabidopsis thaliana (Mouse-ear cress) protein is Putative pentatricopeptide repeat-containing protein At3g08820 (PCMP-H84).